The following is a 319-amino-acid chain: D-alanine--D-alanine ligase B (319 aa).

The region spanning 117–312 (KRVWLSLGLP…FQQLVLAILA (196 aa)) is the ATP-grasp domain. Position 143-198 (143-198 (AQRLGFPLIVKPAHEGSSIGMAKVGGLDELIAAWREAARYDSQVLVEQWISGPEFT)) interacts with ATP. The Mg(2+) site is built by Asp-266, Glu-279, and Asn-281.

The protein belongs to the D-alanine--D-alanine ligase family. It depends on Mg(2+) as a cofactor. Mn(2+) is required as a cofactor.

The protein localises to the cytoplasm. It catalyses the reaction 2 D-alanine + ATP = D-alanyl-D-alanine + ADP + phosphate + H(+). It participates in cell wall biogenesis; peptidoglycan biosynthesis. In terms of biological role, cell wall formation. This Pseudomonas aeruginosa (strain ATCC 15692 / DSM 22644 / CIP 104116 / JCM 14847 / LMG 12228 / 1C / PRS 101 / PAO1) protein is D-alanine--D-alanine ligase B.